Reading from the N-terminus, the 251-residue chain is Flap endonuclease Xni (251 aa).

A Mg(2+)-binding site is contributed by Asp104. Residues 160 to 249 enclose the 5'-3' exonuclease domain; sequence VQPQQLPDYW…IDGNLQQLRL (90 aa). The K(+) site is built by Leu171, Ala172, Pro180, Val182, and Ile185. The interval 184–189 is interaction with DNA; sequence GIGPKS.

This sequence belongs to the Xni family. The cofactor is Mg(2+). K(+) is required as a cofactor.

Has flap endonuclease activity. During DNA replication, flap endonucleases cleave the 5'-overhanging flap structure that is generated by displacement synthesis when DNA polymerase encounters the 5'-end of a downstream Okazaki fragment. In Escherichia coli O6:K15:H31 (strain 536 / UPEC), this protein is Flap endonuclease Xni.